Here is a 253-residue protein sequence, read N- to C-terminus: GTP cyclohydrolase 1 type 2 homolog (253 aa).

5 residues coordinate a divalent metal cation: histidine 64, histidine 65, aspartate 101, histidine 222, and glutamate 226.

It belongs to the GTP cyclohydrolase I type 2/NIF3 family. Homohexamer.

This chain is GTP cyclohydrolase 1 type 2 homolog, found in Halobacterium salinarum (strain ATCC 700922 / JCM 11081 / NRC-1) (Halobacterium halobium).